The chain runs to 458 residues: Methionine aminopeptidase 2-2 (458 aa).

Basic and acidic residues predominate over residues 1–14 (MGSKTPERDGHKGQ). A disordered region spans residues 1–93 (MGSKTPERDG…QSSPPRVPLS (93 aa)). Positions 67–82 (QKKKRKSKKKGKKKAA) are enriched in basic residues. His-209 serves as a coordination point for substrate. Positions 230, 241, and 310 each coordinate a divalent metal cation. His-318 lines the substrate pocket. Glu-343 and Glu-439 together coordinate a divalent metal cation.

Belongs to the peptidase M24A family. Methionine aminopeptidase eukaryotic type 2 subfamily. Co(2+) serves as cofactor. Requires Zn(2+) as cofactor. Mn(2+) is required as a cofactor. It depends on Fe(2+) as a cofactor.

The protein resides in the cytoplasm. It carries out the reaction Release of N-terminal amino acids, preferentially methionine, from peptides and arylamides.. Its function is as follows. Cotranslationally removes the N-terminal methionine from nascent proteins. The N-terminal methionine is often cleaved when the second residue in the primary sequence is small and uncharged (Met-Ala-, Cys, Gly, Pro, Ser, Thr, or Val). The chain is Methionine aminopeptidase 2-2 from Emericella nidulans (strain FGSC A4 / ATCC 38163 / CBS 112.46 / NRRL 194 / M139) (Aspergillus nidulans).